The chain runs to 381 residues: Cytochrome b (381 aa).

The next 4 membrane-spanning stretches (helical) occupy residues 33 to 53, 77 to 98, 113 to 133, and 178 to 198; these read FGSL…FLAM, WLIR…FLHV, WNIG…GYVL, and FFAL…VHLT. Heme b contacts are provided by His83 and His97. The heme b site is built by His182 and His196. Position 201 (His201) interacts with a ubiquinone. The next 4 helical transmembrane spans lie at 226–246, 288–308, 320–340, and 347–367; these read IKDI…ALFS, LGGV…PFLH, ISQT…WIGG, and FIII…HPMP.

Belongs to the cytochrome b family. The cytochrome bc1 complex contains 11 subunits: 3 respiratory subunits (MT-CYB, CYC1 and UQCRFS1), 2 core proteins (UQCRC1 and UQCRC2) and 6 low-molecular weight proteins (UQCRH/QCR6, UQCRB/QCR7, UQCRQ/QCR8, UQCR10/QCR9, UQCR11/QCR10 and a cleavage product of UQCRFS1). This cytochrome bc1 complex then forms a dimer. Heme b is required as a cofactor.

It is found in the mitochondrion inner membrane. In terms of biological role, component of the ubiquinol-cytochrome c reductase complex (complex III or cytochrome b-c1 complex) that is part of the mitochondrial respiratory chain. The b-c1 complex mediates electron transfer from ubiquinol to cytochrome c. Contributes to the generation of a proton gradient across the mitochondrial membrane that is then used for ATP synthesis. This chain is Cytochrome b (MT-CYB), found in Sminthopsis youngsoni (Lesser hairy-footed dunnart).